The primary structure comprises 100 residues: uncharacterized protein (100 aa).

Positions 78-100 are disordered; the sequence is NNGNLDFKGRADERRQPVSNLRM. Residues 84-93 show a composition bias toward basic and acidic residues; that stretch reads FKGRADERRQ.

This is an uncharacterized protein from Saccharomyces cerevisiae (strain ATCC 204508 / S288c) (Baker's yeast).